The following is a 606-amino-acid chain: MIQVLLVTICLAAFPYQGSSIILESGNVNDYEVVYARKVTALPKGAVQPKYEDTMQYELKVNGEPVVLHLEKNKQLFSKDYSETHYSPDGREITTYPPVEDHCYYHGRIENDADSTASISACNGLKGHFKLQGETYFIEPLKLPNSEAHAVFKYENVEKEDEVPKMCGVTQTNWESDEPIKKASQLVVTAEQQRYNHYKYIELVILADYRMVTKNNGDLGKIRTKIYEIVNILNEIFRYLYIRIALVGIEIWSNADLSNVTLSADDTLASFGTWRGTVLLKRKSHDNAQLLTAIDFDGQTIGIANIASMCNQNKSVGVVMDYSPINLVVAVIMAHEMGHNLGINHDTGSCSCGGYSCIMAPEISDQPSKLFSNCSKQAYQRYINYYKPQCILNEPLRTDIVSPPVCGNELLEMGEECDCGSPRNCRDPCCDAATCKLHSWVECESGECCDQCRFKGAGTECRAARSECDIAESCTGQSADCPTDDFKRNGQPCLHNYGYCYNGNCPIMYHQCYALFGSNATVAEDGCFEFNENGDKYFYCRKQSGVNIPCAQEDVKCGRLFCHTKKHPCDYKYSEDPDYGMVDNGTKCADGKVCSNGHCVDVATAY.

Positions 1–20 (MIQVLLVTICLAAFPYQGSS) are cleaved as a signal peptide. Residues 21–190 (IILESGNVND…KKASQLVVTA (170 aa)) constitute a propeptide that is removed on maturation. In terms of domain architecture, Peptidase M12B spans 199–395 (KYIELVILAD…YKPQCILNEP (197 aa)). Glu-202 provides a ligand contact to Ca(2+). A glycan (N-linked (GlcNAc...) asparagine) is linked at Asn-259. Asp-286 contributes to the Ca(2+) binding site. 3 disulfides stabilise this stretch: Cys-310/Cys-390, Cys-350/Cys-374, and Cys-352/Cys-357. Asn-313 carries N-linked (GlcNAc...) asparagine glycosylation. Zn(2+) is bound at residue His-335. Glu-336 is a catalytic residue. 2 residues coordinate Zn(2+): His-339 and His-345. N-linked (GlcNAc...) asparagine glycosylation is present at Asn-373. The Ca(2+) site is built by Cys-390, Asn-393, Val-405, Asn-408, Leu-410, Glu-412, Glu-415, and Asp-418. The region spanning 403-489 (PPVCGNELLE…DCPTDDFKRN (87 aa)) is the Disintegrin domain. 14 disulfides stabilise this stretch: Cys-406–Cys-435, Cys-417–Cys-430, Cys-419–Cys-425, Cys-429–Cys-452, Cys-443–Cys-449, Cys-448–Cys-474, Cys-461–Cys-481, Cys-468–Cys-500, Cys-493–Cys-505, Cys-512–Cys-562, Cys-527–Cys-569, Cys-540–Cys-550, Cys-557–Cys-594, and Cys-588–Cys-599. Residues 467–469 (ECD) carry the D/ECD-tripeptide motif. Positions 469, 472, and 484 each coordinate Ca(2+). A glycan (N-linked (GlcNAc...) asparagine) is linked at Asn-519. The N-linked (GlcNAc...) asparagine glycan is linked to Asn-584.

Belongs to the venom metalloproteinase (M12B) family. P-III subfamily. P-IIIa sub-subfamily. As to quaternary structure, monomer. Zn(2+) is required as a cofactor. In terms of tissue distribution, expressed by the venom gland.

Its subcellular location is the secreted. Its function is as follows. The metalloproteinase-disintegrin-like HF3 is a potent hemorrhagic toxin that activates macrophages for phagocytosis through integrin alpha-M/beta-2 (ITGAM/ITGB2). It inhibits collagen-induced platelet aggregation. This protein shows cleavage specificity for substrate for leucine at P1' position, followed by hydrophobic residues in P2'. The sequence is that of Zinc metalloproteinase-disintegrin-like HF3 from Bothrops jararaca (Jararaca).